The sequence spans 281 residues: Elongation factor 1-delta (281 aa).

Residue A2 is modified to N-acetylalanine. K17 carries the N6-acetyllysine modification. Phosphoserine is present on residues S37, S44, S60, S86, and S106. The tract at residues 80 to 115 (LIVRIASLEVENQNLRGVVQDLQQAISKLEVRLSTL) is leucine-zipper. The residue at position 107 (K107) is an N6-acetyllysine. The segment covering 115–132 (LEKSSPTHRATAPQTQHV) has biased composition (polar residues). The disordered stretch occupies residues 115–172 (LEKSSPTHRATAPQTQHVSPMRQVEPPAKKGATPAEDDEDNDIDLFGSDEEEEDKEAA). N6-acetyllysine; alternate is present on K117. N6-succinyllysine; alternate is present on K117. S119 carries the post-translational modification Phosphoserine. Position 129 is a phosphothreonine (T129). Position 133 is a phosphoserine (S133). At T147 the chain carries Phosphothreonine. Residues 149–169 (AEDDEDNDIDLFGSDEEEEDK) are compositionally biased toward acidic residues. A Phosphoserine; by CK2 modification is found at S162. Residues 173 to 281 (RLREERLRQY…SVDIAAFNKI (109 aa)) form a catalytic (GEF) region.

The protein belongs to the EF-1-beta/EF-1-delta family. As to quaternary structure, EF-1 is composed of 4 subunits: alpha, beta, delta isoform 1, and gamma. Isoform 2 interacts with HSF1 and NFE2L2.

The protein resides in the nucleus. In terms of biological role, EF-1-beta and EF-1-delta stimulate the exchange of GDP bound to EF-1-alpha to GTP, regenerating EF-1-alpha for another round of transfer of aminoacyl-tRNAs to the ribosome. Its function is as follows. Regulates induction of heat-shock-responsive genes through association with heat shock transcription factors and direct DNA-binding at heat shock promoter elements (HSE). The sequence is that of Elongation factor 1-delta (Eef1d) from Rattus norvegicus (Rat).